Here is a 322-residue protein sequence, read N- to C-terminus: Lipoyl synthase (322 aa).

The segment covering M1–D25 has biased composition (basic and acidic residues). Residues M1–Q29 form a disordered region. The [4Fe-4S] cluster site is built by C61, C66, C72, C87, C91, C94, and S300. The region spanning W73–L289 is the Radical SAM core domain.

The protein belongs to the radical SAM superfamily. Lipoyl synthase family. [4Fe-4S] cluster is required as a cofactor.

It is found in the cytoplasm. It catalyses the reaction [[Fe-S] cluster scaffold protein carrying a second [4Fe-4S](2+) cluster] + N(6)-octanoyl-L-lysyl-[protein] + 2 oxidized [2Fe-2S]-[ferredoxin] + 2 S-adenosyl-L-methionine + 4 H(+) = [[Fe-S] cluster scaffold protein] + N(6)-[(R)-dihydrolipoyl]-L-lysyl-[protein] + 4 Fe(3+) + 2 hydrogen sulfide + 2 5'-deoxyadenosine + 2 L-methionine + 2 reduced [2Fe-2S]-[ferredoxin]. Its pathway is protein modification; protein lipoylation via endogenous pathway; protein N(6)-(lipoyl)lysine from octanoyl-[acyl-carrier-protein]: step 2/2. Catalyzes the radical-mediated insertion of two sulfur atoms into the C-6 and C-8 positions of the octanoyl moiety bound to the lipoyl domains of lipoate-dependent enzymes, thereby converting the octanoylated domains into lipoylated derivatives. In Gluconobacter oxydans (strain 621H) (Gluconobacter suboxydans), this protein is Lipoyl synthase.